Reading from the N-terminus, the 1380-residue chain is DNA-directed RNA polymerase subunit beta (1380 aa).

The protein belongs to the RNA polymerase beta chain family. In terms of assembly, the RNAP catalytic core consists of 2 alpha, 1 beta, 1 beta' and 1 omega subunit. When a sigma factor is associated with the core the holoenzyme is formed, which can initiate transcription.

It catalyses the reaction RNA(n) + a ribonucleoside 5'-triphosphate = RNA(n+1) + diphosphate. Its function is as follows. DNA-dependent RNA polymerase catalyzes the transcription of DNA into RNA using the four ribonucleoside triphosphates as substrates. This is DNA-directed RNA polymerase subunit beta from Sinorhizobium fredii (strain NBRC 101917 / NGR234).